We begin with the raw amino-acid sequence, 143 residues long: Hemoglobin subunit alpha (143 aa).

A Globin domain is found at 2 to 143 (VLSPADKTNV…VSTVLVSKYR (142 aa)). Serine 4 is subject to Phosphoserine. Lysine 8 carries the N6-succinyllysine modification. The residue at position 9 (threonine 9) is a Phosphothreonine. At lysine 12 the chain carries N6-succinyllysine. Lysine 17 is modified (N6-acetyllysine; alternate). An N6-succinyllysine; alternate modification is found at lysine 17. Tyrosine 25 bears the Phosphotyrosine mark. Serine 36 carries the phosphoserine modification. Position 41 is an N6-succinyllysine (lysine 41). Serine 51 bears the Phosphoserine mark. Position 60 (histidine 60) interacts with O2. Histidine 89 contributes to the heme b binding site. Residue serine 104 is modified to Phosphoserine. Threonine 110 carries the phosphothreonine modification. Position 126 is a phosphoserine (serine 126). Threonine 136 carries the phosphothreonine modification. The residue at position 140 (serine 140) is a Phosphoserine.

The protein belongs to the globin family. In terms of assembly, heterotetramer of two alpha chains and two beta chains. In terms of tissue distribution, red blood cells.

Functionally, involved in oxygen transport from the lung to the various peripheral tissues. Hemopressin acts as an antagonist peptide of the cannabinoid receptor CNR1. Hemopressin-binding efficiently blocks cannabinoid receptor CNR1 and subsequent signaling. This Pipistrellus abramus (Japanese pipistrelle) protein is Hemoglobin subunit alpha (HBA).